A 521-amino-acid polypeptide reads, in one-letter code: Cytochrome P450 monooxygenase ABA2 (521 aa).

A helical transmembrane segment spans residues 15–35; that stretch reads AGHLGMAVTFTILVAFTIHVL. A glycan (N-linked (GlcNAc...) asparagine) is linked at Asn366. Cys458 is a heme binding site.

This sequence belongs to the cytochrome P450 family. Requires heme as cofactor.

It is found in the membrane. It functions in the pathway hormone biosynthesis. Functionally, cytochrome P450 monooxygenase involved in the biosynthesis of abscisic acid (ABA), a phytohormone that acts antagonistically toward salicylic acid (SA), jasmonic acid (JA) and ethylene (ETH) signaling, to impede plant defense responses. During pathogen-host interaction, ABA plays a dual role in disease severity by increasing plant susceptibility and accelerating pathogenesis in the fungus itself. The first step of the pathway catalyzes the reaction from farnesyl diphosphate to alpha-ionylideneethane performed by the alpha-ionylideneethane synthase ABA3 via a three-step reaction mechanism involving 2 neutral intermediates, beta-farnesene and allofarnesene. The cytochrome P450 monooxygenase ABA1 might then be involved in the conversion of alpha-ionylideneethane to alpha-ionylideneacetic acid. Alpha-ionylideneacetic acid is further converted to abscisic acid in 2 steps involving the cytochrome P450 monooxygenase ABA2 and the short-chain dehydrogenase/reductase ABA4, via the intermediates 1'-deoxy-ABA or 1',4'-trans-diol-ABA, depending on the order of action of these 2 enzymes. ABA2 is responsible for the hydroxylation of carbon atom C-1' and ABA4 might be involved in the oxidation of the C-4' carbon atom. The protein is Cytochrome P450 monooxygenase ABA2 of Pyricularia oryzae (strain 70-15 / ATCC MYA-4617 / FGSC 8958) (Rice blast fungus).